A 369-amino-acid polypeptide reads, in one-letter code: MRN complex-interacting protein (369 aa).

Ser115 carries the phosphoserine modification. 3 disordered regions span residues 122–150 (GGGV…PRKR), 209–245 (PSFT…PCPA), and 282–317 (AQAE…TPMP). The short motif at 148–151 (RKRK) is the Nuclear localization signal (NLS) element. The segment covering 221–230 (KGRESSREDL) has biased composition (basic and acidic residues). The interval 223 to 259 (RESSREDLDTMELVPRGEPPCPAQQVRTMSKWEQCLG) is necessary for the association with the MRN complex.

The protein belongs to the MRNIP family. Associates with the MRE11-RAD50-NBN (MRN) damage-sensing complex; this association is constitutive. Interacts with MRE11. Interacts with NBN. Interacts with RAD50. In terms of processing, phosphorylated; phosphorylation is constitutive and occurs in the absence of any DNA-damaging stimulus. Phosphorylation on Ser-115 is necessary for its nuclear retention.

It is found in the nucleus. Its subcellular location is the nucleoplasm. Functionally, plays a role in the cellular response to DNA damage and the maintenance of genome stability through its association with the MRN damage-sensing complex. Promotes chromatin loading and activity of the MRN complex to facilitate subsequent ATM-mediated DNA damage response signaling and DNA repair. The chain is MRN complex-interacting protein from Bos taurus (Bovine).